A 332-amino-acid polypeptide reads, in one-letter code: 5-dehydro-2-deoxygluconokinase (332 aa).

Belongs to the carbohydrate kinase PfkB family.

The enzyme catalyses 5-dehydro-2-deoxy-D-gluconate + ATP = 6-phospho-5-dehydro-2-deoxy-D-gluconate + ADP + H(+). The protein operates within polyol metabolism; myo-inositol degradation into acetyl-CoA; acetyl-CoA from myo-inositol: step 5/7. Functionally, catalyzes the phosphorylation of 5-dehydro-2-deoxy-D-gluconate (2-deoxy-5-keto-D-gluconate or DKG) to 6-phospho-5-dehydro-2-deoxy-D-gluconate (DKGP). This is 5-dehydro-2-deoxygluconokinase from Bacillus thuringiensis subsp. konkukian (strain 97-27).